The following is a 61-amino-acid chain: U-stichotoxin-Hcr1a (61 aa).

The N-terminal stretch at 1 to 21 (MKPAIFLMLFVAMFLISEGEG) is a signal peptide. Positions 22–31 (FKPKDAPQER) are excised as a propeptide. Pro36 is subject to Hydroxyproline. 2 disulfide bridges follow: Cys41–Cys53 and Cys44–Cys59.

Belongs to the Hau1a/HC18/HC19 family.

It localises to the secreted. The protein resides in the nematocyst. Functionally, toxin that is lethal to crab. Does not produce the typical symptoms associated with sodium channel toxins in crabs, suggesting that it likely does not act on sodium channels. This is U-stichotoxin-Hcr1a from Radianthus crispa (Leathery sea anemone).